The chain runs to 341 residues: MEHAAPLAVPLGQAEVFQALQRLHMTIFSQSVSPCGKFLAAGNNYGQIAIFSLSAALSSEAKEESKKPVVVFHAHDGPVYSMVSTDRHLLSAGDGEVKGWLWAEILKKGCKELWRRQPPYRTSLEVPEINALLLVPKENSLILAGGDCQLHSMDLETGAFTRALRGHTDYIHCLALRERSPEVLSGGEDGAVRLWDLRIAKEVQTIEVYKHEECSRPHNGRWIGCLATDSDWMVCGGGPALTLWHLRSSTPTTVFPIRAPQKHVTFYQDLILSAGQGCCVNHWQLSGELKAQVPGSSPGLLSLSLNQQPAAPECKVLTASGNSCRVDVFTNLGYRAFSLSF.

WD repeat units lie at residues 22–61 (RLHM…SSEA), 74–112 (AHDG…GCKE), 124–165 (LEVP…RALR), 166–205 (GHTD…EVQT), 215–254 (SRPH…PTTV), 256–293 (PIRA…KAQV), and 295–339 (GSSP…AFSL). The residue at position 180 (S180) is a Phosphoserine.

The protein belongs to the WD repeat THOC6 family. Component of the THO subcomplex, which is composed of THOC1, THOC2, THOC3, THOC5, THOC6 and THOC7. The THO subcomplex interacts with DDX39B to form the THO-DDX39B complex which multimerizes into a 28-subunit tetrameric assembly. Component of the transcription/export (TREX) complex at least composed of ALYREF/THOC4, DDX39B, SARNP/CIP29, CHTOP and the THO subcomplex; in the complex interacts with THOC5; together with THOC5 and THOC7, plays a key structural role in the oligomerization of the THO-DDX39B complex. TREX seems to have a dynamic structure involving ATP-dependent remodeling.

Its subcellular location is the nucleus. The protein resides in the nucleus speckle. Its function is as follows. Component of the THO subcomplex of the TREX complex which is thought to couple mRNA transcription, processing and nuclear export, and which specifically associates with spliced mRNA and not with unspliced pre-mRNA. Plays a key structural role in the oligomerization of the THO-DDX39B complex. TREX is recruited to spliced mRNAs by a transcription-independent mechanism, binds to mRNA upstream of the exon-junction complex (EJC) and is recruited in a splicing- and cap-dependent manner to a region near the 5' end of the mRNA where it functions in mRNA export to the cytoplasm via the TAP/NXF1 pathway. Plays a role in apoptosis negative control involved in brain development. This Mus musculus (Mouse) protein is THO complex subunit 6 homolog (Thoc6).